Here is a 338-residue protein sequence, read N- to C-terminus: Fructose-1,6-bisphosphatase class 1 1 (338 aa).

Mg(2+)-binding residues include glutamate 91, aspartate 113, leucine 115, and aspartate 116. Residues 116–119, asparagine 208, and lysine 274 contribute to the substrate site; that span reads DGSS. Glutamate 280 serves as a coordination point for Mg(2+).

The protein belongs to the FBPase class 1 family. Homotetramer. It depends on Mg(2+) as a cofactor.

It is found in the cytoplasm. The enzyme catalyses beta-D-fructose 1,6-bisphosphate + H2O = beta-D-fructose 6-phosphate + phosphate. Its pathway is carbohydrate biosynthesis; gluconeogenesis. The chain is Fructose-1,6-bisphosphatase class 1 1 from Cupriavidus metallidurans (strain ATCC 43123 / DSM 2839 / NBRC 102507 / CH34) (Ralstonia metallidurans).